The primary structure comprises 489 residues: MDREYGSYNQRSMDSYGNQSYSVDEMGDSNFSRFGPYESYDSRSSVGGRDLYRSGYGYNDHEQGHFGDSYDGRYENPYRNSVDSFEGRSQGGSSWDPSFTRSKVRTGFMEDRGRDSYSSYGSFSSPYMKPATVGSRGRGMPAYPENAFGGRSNDAFGGPSKGRGRGRGQMPEYGGIRRPGLVGDYKQLGGAARGVARGVKRKMAPPFKPVGVFGKKQKLSKPGANQNKTVPPPAEKLSEEEEEKRRTEARREKQRRRREKNSEKYGDGMAFTCSFCKFRSFDEKGIEEHLSSTTHQEMLDHIQKQTKFDKPVMEFLHECIVNKFKKTAARRAQSLANEAAKALEKDVMEGVTPDDHMMKVETVHCSACSVYVPALHSSVQLHLKSADHSKSKLAYKEQIKRESILTATSILNNPLVKARYELYLKGENPFETQPEEQQQEQEEEEEEEEQQEQAAVPEQDLSEEQPAAIAAEPEGEDFTCDPLTTTDEV.

4 disordered regions span residues Met1–Asp28, Glu62–Thr100, Val133–Leu181, and Pro205–Glu263. Positions Ser7 to Ser22 are enriched in polar residues. Over residues Glu62–Asn76 the composition is skewed to basic and acidic residues. A compositionally biased stretch (polar residues) spans Gly91–Thr100. Positions Lys200 to Lys221 match the Bipartite nuclear localization signal motif. C2H2 AKAP95-type zinc fingers lie at residues Cys273 to His295 and Cys365 to His388. The segment at Glu431–Val489 is disordered. Acidic residues predominate over residues Gln433–Gln451.

The protein belongs to the AKAP95 family. Component of the DBIRD complex.

It is found in the nucleus. Its function is as follows. Core component of the DBIRD complex, a multiprotein complex that acts at the interface between core mRNP particles and RNA polymerase II (RNAPII) and integrates transcript elongation with the regulation of alternative splicing. This chain is DBIRD complex subunit ZNF326 (znf326), found in Xenopus tropicalis (Western clawed frog).